An 85-amino-acid chain; its full sequence is Small ribosomal subunit protein bS20 (85 aa).

Positions 1–25 (MANIKSAIKRAKLSEERRAHNASIK) are disordered.

The protein belongs to the bacterial ribosomal protein bS20 family.

Binds directly to 16S ribosomal RNA. The chain is Small ribosomal subunit protein bS20 from Bacillus anthracis (strain A0248).